The following is a 404-amino-acid chain: Probable tRNA sulfurtransferase (404 aa).

Residues 60–165 (QPIVEALKLV…DEAAYISYEE (106 aa)) form the THUMP domain. Residues 183–184 (ML), 208–209 (HF), arginine 265, glycine 287, and glutamine 296 contribute to the ATP site.

It belongs to the ThiI family.

Its subcellular location is the cytoplasm. It carries out the reaction [ThiI sulfur-carrier protein]-S-sulfanyl-L-cysteine + a uridine in tRNA + 2 reduced [2Fe-2S]-[ferredoxin] + ATP + H(+) = [ThiI sulfur-carrier protein]-L-cysteine + a 4-thiouridine in tRNA + 2 oxidized [2Fe-2S]-[ferredoxin] + AMP + diphosphate. It catalyses the reaction [ThiS sulfur-carrier protein]-C-terminal Gly-Gly-AMP + S-sulfanyl-L-cysteinyl-[cysteine desulfurase] + AH2 = [ThiS sulfur-carrier protein]-C-terminal-Gly-aminoethanethioate + L-cysteinyl-[cysteine desulfurase] + A + AMP + 2 H(+). The protein operates within cofactor biosynthesis; thiamine diphosphate biosynthesis. In terms of biological role, catalyzes the ATP-dependent transfer of a sulfur to tRNA to produce 4-thiouridine in position 8 of tRNAs, which functions as a near-UV photosensor. Also catalyzes the transfer of sulfur to the sulfur carrier protein ThiS, forming ThiS-thiocarboxylate. This is a step in the synthesis of thiazole, in the thiamine biosynthesis pathway. The sulfur is donated as persulfide by IscS. The protein is Probable tRNA sulfurtransferase of Streptococcus pyogenes serotype M3 (strain ATCC BAA-595 / MGAS315).